Reading from the N-terminus, the 468-residue chain is Adenosylhomocysteinase (468 aa).

The substrate site is built by Thr63, Asp139, and Glu164. Residue 165 to 167 (TTT) participates in NAD(+) binding. 2 residues coordinate substrate: Lys194 and Asp198. Residues Asn199, 228-233 (GYGDVG), Glu251, Asn300, 321-323 (IGH), and Asn374 each bind NAD(+).

The protein belongs to the adenosylhomocysteinase family. Requires NAD(+) as cofactor.

The protein resides in the cytoplasm. It carries out the reaction S-adenosyl-L-homocysteine + H2O = L-homocysteine + adenosine. The protein operates within amino-acid biosynthesis; L-homocysteine biosynthesis; L-homocysteine from S-adenosyl-L-homocysteine: step 1/1. Its function is as follows. May play a key role in the regulation of the intracellular concentration of adenosylhomocysteine. The protein is Adenosylhomocysteinase of Stutzerimonas stutzeri (strain A1501) (Pseudomonas stutzeri).